A 319-amino-acid polypeptide reads, in one-letter code: Ribonucleoside-diphosphate reductase small chain (319 aa).

Fe cation contacts are provided by D70, E101, and H104. Y108 is a catalytic residue. Fe cation is bound by residues E163, E197, and H200. Residues 313–319 (FSLDVDF) form an interaction with R1 region.

This sequence belongs to the ribonucleoside diphosphate reductase small chain family. In terms of assembly, interacts with RNR1/OPG080 subunit. Can interact with host RNR1 supunit. Fe cation serves as cofactor.

It carries out the reaction a 2'-deoxyribonucleoside 5'-diphosphate + [thioredoxin]-disulfide + H2O = a ribonucleoside 5'-diphosphate + [thioredoxin]-dithiol. Ribonucleoside-diphosphate reductase holoenzyme provides the precursors necessary for viral DNA synthesis. Allows virus growth in non-dividing cells. Catalyzes the biosynthesis of deoxyribonucleotides from the corresponding ribonucleotides. The protein is Ribonucleoside-diphosphate reductase small chain (OPG048) of Vaccinia virus (strain Ankara) (VACV).